Reading from the N-terminus, the 1732-residue chain is Transient receptor potential cation channel subfamily M member 3 (1732 aa).

Topologically, residues 1–894 are cytoplasmic; it reads MPEPWGTVYF…RKIYEFYNAP (894 aa). 4 calmodulin-binding regions span residues 192 to 215, 300 to 323, 601 to 624, and 793 to 816; these read NFEL…MTTG, TGKY…QKIN, RKRF…KLLG, and RKNS…LEFK. Residues 617-625 are required for the inhibitory action of G-beta/gamma-subunits of heterotrimeric G-proteins; the sequence is PKALKLLGM. Ser-796 contacts 1,2-dioctanoyl-sn-glycero-3-phospho-(1D-myo-inositol-4,5-bisphosphate). A helical membrane pass occupies residues 895–918; that stretch reads IVKFWFYTLAYIGYLMLFNYIVLV. The Extracellular portion of the chain corresponds to 919-925; sequence KMERWPS. A helical transmembrane segment spans residues 926–948; it reads TQEWIVISYIFTLGIEKMREILM. Residues 949 to 964 are Cytoplasmic-facing; the sequence is SEPGKLLQKVKVWLQE. A helical membrane pass occupies residues 965–985; sequence YWNVTDLIAILLFSVGMILRL. The Extracellular portion of the chain corresponds to 986–989; that stretch reads QDQP. A helical transmembrane segment spans residues 990–1013; sequence FRSDGRVIYCVNIIYWYIRLLDIF. The Cytoplasmic portion of the chain corresponds to 1014-1028; it reads GVNKYLGPYVMMIGK. 1,2-dioctanoyl-sn-glycero-3-phospho-(1D-myo-inositol-4,5-bisphosphate) is bound by residues Lys-1017 and Tyr-1018. Residues 1029-1056 form a helical membrane-spanning segment; it reads MMIDMMYFVIIMLVVLMSFGVARQAILF. Residues 1057–1111 are Extracellular-facing; sequence PNEEPSWKLAKNIFYMPYWMIYGEVFADQIDPPCGQNETREDGKIIQLPPCKTGA. The chain crosses the membrane as a helical span at residues 1112-1137; that stretch reads WIVPAIMACYLLVANILLVNLLIAVF. Residues 1138-1732 lie on the Cytoplasmic side of the membrane; sequence NNTFFEVKSI…AFQSFESKHN (595 aa). A coiled-coil region spans residues 1241-1301; that stretch reads ERIRVTSERV…LERLTGLERA (61 aa). Low complexity predominate over residues 1459 to 1476; it reads PVPSTAPSSSAYATLAPT. Disordered regions lie at residues 1459–1478 and 1611–1732; these read PVPS…PTDR and REAE…SKHN. 3 stretches are compositionally biased toward polar residues: residues 1635 to 1653, 1690 to 1701, and 1720 to 1732; these read AISS…NNIT, NTASLRNPFQRS, and RTSA…SKHN.

It belongs to the transient receptor (TC 1.A.4) family. LTrpC subfamily. TRPM3 sub-subfamily. Homotetramer. Interacts with TRPM1; the interaction results in the formation of a heteromultimeric cation channel complex that are functionally different from the homomeric channels. Expressed primarily in the kidney and, at lower levels, in brain, testis, ovary, pancreas and spinal cord. Expression in the brain and kidney was determined at protein level. In the kidney, expressed predominantly in the collecting tubular epithelium in the medulla, medullary rays, and periglomerular regions; in the brain, highest levels are found in the cerebellum, choroid plexus, the locus coeruleus, the posterior thalamus and the substantia nigra. Down-regulated in renal tumors compared to normal kidney. Expressed in the lens.

It is found in the cell membrane. It catalyses the reaction Ca(2+)(in) = Ca(2+)(out). The catalysed reaction is Mn(2+)(in) = Mn(2+)(out). The enzyme catalyses Zn(2+)(in) = Zn(2+)(out). It carries out the reaction Mg(2+)(in) = Mg(2+)(out). Its activity is regulated as follows. Activated by the neurosteroid pregnelonone sulfate (PregS); PregS activates the channel by shifting its current-voltage activation curve toward more negative membrane potentials and also potentiates temperature-induced activation. Activated by sphingosine. Activated by heat. Intracellular Ca(2+) inhibits TRPM3 probably via interaction with Ca(2+)/calmodulin. Intracellular Mg(2+) inhibits TRPM3 activity. Both intracellular and extracellular protons block TRPM3 through propable binding sites in the pore region. Positively regulated by phosphoinositide phosphoinositol 4,5-biphosphate (PI(4,5)P2). Strongly inhibited by activation of G(i)-coupled receptors via direct binding with G-betagamma-subunits of heterotrimeric G-proteins. In terms of biological role, constitutively active, non-selective divalent cation-conducting channel that is permeable to Ca(2+), Mn(2+), and Mg(2+), with a high permeability for Ca(2+). However, can be enhanced by increasing temperature and by ligands, including the endogenous neurosteroid pregnenolone sulfate and sphingosine-1 and suppressed by intracellular Mg(2+). Implicated in a variety of cellular processes, including insulin/peptide secretion, vascular constriction and dilation, noxious heat sensing, inflammatory and spontaneous pain sensitivity. In neurons of the dorsal root ganglia, functions as thermosensitive channel for the detection of noxious heat and spontaneous pain. Suggested to function as an ionotropic steroid receptor in beta-cell, indeed pregnenolone sulfate leads to Ca(2+) influx and enhanced insulin secretion. Mediates Zn(2+) uptake into the lumen of pancreatic beta cell secretory granules, thereby regulating insulin secretion. Forms heteromultimeric ion channels with TRPM1 which are permeable for Ca(2+) and Zn(2+) ions. Exists as multiple splice variants which differ significantly in their biophysical properties. This is Transient receptor potential cation channel subfamily M member 3 from Homo sapiens (Human).